Here is a 198-residue protein sequence, read N- to C-terminus: Ribonuclease HII (198 aa).

An RNase H type-2 domain is found at 11–198 (TCIAGVDEVG…APVKRALGLA (188 aa)). Asp17, Glu18, and Asp109 together coordinate a divalent metal cation.

Belongs to the RNase HII family. It depends on Mn(2+) as a cofactor. Mg(2+) serves as cofactor.

It localises to the cytoplasm. It carries out the reaction Endonucleolytic cleavage to 5'-phosphomonoester.. In terms of biological role, endonuclease that specifically degrades the RNA of RNA-DNA hybrids. This is Ribonuclease HII from Pectobacterium carotovorum subsp. carotovorum (strain PC1).